A 489-amino-acid chain; its full sequence is Glycogen synthase (489 aa).

R20 lines the ADP-alpha-D-glucose pocket.

This sequence belongs to the glycosyltransferase 1 family. Bacterial/plant glycogen synthase subfamily.

The catalysed reaction is [(1-&gt;4)-alpha-D-glucosyl](n) + ADP-alpha-D-glucose = [(1-&gt;4)-alpha-D-glucosyl](n+1) + ADP + H(+). Its pathway is glycan biosynthesis; glycogen biosynthesis. Functionally, synthesizes alpha-1,4-glucan chains using ADP-glucose. The chain is Glycogen synthase from Chlorobium chlorochromatii (strain CaD3).